A 327-amino-acid polypeptide reads, in one-letter code: Biotin synthase (327 aa).

One can recognise a Radical SAM core domain in the interval Phe44–Arg273. The [4Fe-4S] cluster site is built by Cys62, Cys66, and Cys69. [2Fe-2S] cluster-binding residues include Cys138, Cys198, and Arg268.

This sequence belongs to the radical SAM superfamily. Biotin synthase family. In terms of assembly, homodimer. [4Fe-4S] cluster is required as a cofactor. The cofactor is [2Fe-2S] cluster.

The catalysed reaction is (4R,5S)-dethiobiotin + (sulfur carrier)-SH + 2 reduced [2Fe-2S]-[ferredoxin] + 2 S-adenosyl-L-methionine = (sulfur carrier)-H + biotin + 2 5'-deoxyadenosine + 2 L-methionine + 2 oxidized [2Fe-2S]-[ferredoxin]. The protein operates within cofactor biosynthesis; biotin biosynthesis; biotin from 7,8-diaminononanoate: step 2/2. Catalyzes the conversion of dethiobiotin (DTB) to biotin by the insertion of a sulfur atom into dethiobiotin via a radical-based mechanism. This Parabacteroides distasonis (strain ATCC 8503 / DSM 20701 / CIP 104284 / JCM 5825 / NCTC 11152) protein is Biotin synthase.